The primary structure comprises 302 residues: tRNA dimethylallyltransferase (302 aa).

G9–S16 is an ATP binding site. T11–S16 contacts substrate. An interaction with substrate tRNA region spans residues D34–Q37.

It belongs to the IPP transferase family. As to quaternary structure, monomer. Mg(2+) is required as a cofactor.

It carries out the reaction adenosine(37) in tRNA + dimethylallyl diphosphate = N(6)-dimethylallyladenosine(37) in tRNA + diphosphate. In terms of biological role, catalyzes the transfer of a dimethylallyl group onto the adenine at position 37 in tRNAs that read codons beginning with uridine, leading to the formation of N6-(dimethylallyl)adenosine (i(6)A). This is tRNA dimethylallyltransferase from Gloeobacter violaceus (strain ATCC 29082 / PCC 7421).